Consider the following 350-residue polypeptide: Hydroxymethylglutaryl-CoA synthase (350 aa).

Glu83 (proton donor/acceptor) is an active-site residue. The Acyl-thioester intermediate role is filled by Cys115. (3S)-3-hydroxy-3-methylglutaryl-CoA contacts are provided by Cys115 and Thr156. Arg204 is a CoA binding site. Residues Thr206 and His239 each coordinate (3S)-3-hydroxy-3-methylglutaryl-CoA. Catalysis depends on His239, which acts as the Proton donor/acceptor. Lys244 lines the CoA pocket. Residues Asn271 and Ser301 each contribute to the (3S)-3-hydroxy-3-methylglutaryl-CoA site.

This sequence belongs to the thiolase-like superfamily. Archaeal HMG-CoA synthase family. Interacts with acetoacetyl-CoA thiolase that catalyzes the precedent step in the pathway and with a DUF35 protein. The acetoacetyl-CoA thiolase/HMG-CoA synthase complex channels the intermediate via a fused CoA-binding site, which allows for efficient coupling of the endergonic thiolase reaction with the exergonic HMGCS reaction.

It catalyses the reaction acetoacetyl-CoA + acetyl-CoA + H2O = (3S)-3-hydroxy-3-methylglutaryl-CoA + CoA + H(+). It participates in metabolic intermediate biosynthesis; (R)-mevalonate biosynthesis; (R)-mevalonate from acetyl-CoA: step 2/3. Catalyzes the condensation of acetyl-CoA with acetoacetyl-CoA to form 3-hydroxy-3-methylglutaryl-CoA (HMG-CoA). Functions in the mevalonate (MVA) pathway leading to isopentenyl diphosphate (IPP), a key precursor for the biosynthesis of isoprenoid compounds that are building blocks of archaeal membrane lipids. This chain is Hydroxymethylglutaryl-CoA synthase, found in Thermococcus kodakarensis (strain ATCC BAA-918 / JCM 12380 / KOD1) (Pyrococcus kodakaraensis (strain KOD1)).